The following is a 284-amino-acid chain: L-fucose dehydrogenase (284 aa).

Arginine 19, isoleucine 21, aspartate 40, lysine 41, aspartate 62, valine 63, asparagine 89, tyrosine 154, lysine 158, isoleucine 187, threonine 189, and leucine 191 together coordinate NAD(+).

Belongs to the short-chain dehydrogenases/reductases (SDR) family.

It carries out the reaction L-fucose + NAD(+) = L-fucono-1,5-lactone + NADH + H(+). The enzyme catalyses D-arabinose + NAD(+) = D-arabinono-1,5-lactone + NADH + H(+). The catalysed reaction is L-galactose + NAD(+) = L-galactono-1,5-lactone + NADH + H(+). It participates in carbohydrate degradation; L-fucose degradation. In terms of biological role, catalyzes the NAD(+)-dependent oxidation of L-fucose, yielding L-fucono-1,5-lactone, which rapidly converts spontaneously to L-fucone-1,4-lactone. Can also act on D-arabinose and L-galactose, with lower catalytic efficiency. Does not use NADPH. May be the initial enzyme of the putative L-fucose degradation pathway in mammals. The sequence is that of L-fucose dehydrogenase (HSD17B14) from Oryctolagus cuniculus (Rabbit).